Reading from the N-terminus, the 1204-residue chain is Exportin-5 (1204 aa).

Residues 1-108 are necessary for interaction with Ran; it reads MEMEQVNALC…ANGTLRILEE (108 aa). Lysine 396 bears the N6-acetyllysine mark. Residues 533–640 are necessary for interaction with ILF3; that stretch reads ELLQLVLNFE…KQLLSNELLL (108 aa). The interval 641–642 is pre-siRNA binding; it reads TQ.

It belongs to the exportin family. Component of a nuclear export receptor complex composed of XPO5, RAN, dsRNA-binding proteins and dsRNA. Found in a nuclear export complex with XPO5, RAN, EEF1A1, and aminoacylated tRNA. Found in a nuclear export complex with XPO5, RAN, ILF3 and dsRNA. Found in a nuclear export complex with XPO5, RAN and pre-miRNA. Found in a nuclear export complex with XPO5, RAN, ILF3 and minihelix VA1 dsRNA. Found in a nuclear export complex with XPO5, RAN, ILF3, ZNF346 and dsRNA. Interacts with EEF1A1, ILF3, NUP153, NUP214 and ZNF346. Interacts with RAN and cargo proteins in a GTP-dependent manner. Interacts with ADAR/ADAR1 (via DRBM domains). Interacts with SMAD4; mediates nuclear export of SMAD4. Interacts with RAN (GTP-bound form).

The protein resides in the nucleus. The protein localises to the cytoplasm. Its function is as follows. Mediates the nuclear export of proteins bearing a double-stranded RNA binding domain (dsRBD) and double-stranded RNAs (cargos). XPO5 in the nucleus binds cooperatively to the RNA and to the GTPase Ran in its active GTP-bound form. Proteins containing dsRBDs can associate with this trimeric complex through the RNA. Docking of this complex to the nuclear pore complex (NPC) is mediated through binding to nucleoporins. Upon transit of a nuclear export complex into the cytoplasm, hydrolysis of Ran-GTP to Ran-GDP (induced by RANBP1 and RANGAP1, respectively) cause disassembly of the complex and release of the cargo from the export receptor. XPO5 then returns to the nuclear compartment by diffusion through the nuclear pore complex, to mediate another round of transport. The directionality of nuclear export is thought to be conferred by an asymmetric distribution of the GTP- and GDP-bound forms of Ran between the cytoplasm and nucleus. Overexpression may in some circumstances enhance RNA-mediated gene silencing (RNAi). Mediates nuclear export of ADAR/ADAR1 in a RanGTP-dependent manner. Functionally, mediates the nuclear export of micro-RNA precursors, which form short hairpins. Also mediates the nuclear export of synthetic short hairpin RNAs used for RNA interference. In some circumstances can also mediate the nuclear export of deacylated and aminoacylated tRNAs. Specifically recognizes dsRNAs that lack a 5'-overhang in a sequence-independent manner, have only a short 3'-overhang, and that have a double-stranded length of at least 15 base-pairs. Binding is dependent on Ran-GTP. In Mus musculus (Mouse), this protein is Exportin-5 (Xpo5).